The following is a 133-amino-acid chain: Single-stranded DNA-binding protein 2 (133 aa).

Residues 1-103 enclose the SSB domain; the sequence is MNKTILIGRL…VVAEEVKFLE (103 aa).

As to quaternary structure, homotetramer.

The protein is Single-stranded DNA-binding protein 2 (ssb2) of Clostridium acetobutylicum (strain ATCC 824 / DSM 792 / JCM 1419 / IAM 19013 / LMG 5710 / NBRC 13948 / NRRL B-527 / VKM B-1787 / 2291 / W).